A 409-amino-acid chain; its full sequence is Failed axon connections homolog (409 aa).

Residues 68 to 88 (YLTGGALLAAAAYLLHELLVI) form a helical membrane-spanning segment. The tract at residues 372 to 409 (DEGAENSFSRTPDTDFTGHSLFDSDVDMDDYTDHEQCK) is disordered.

It belongs to the FAX family.

Its subcellular location is the membrane. Functionally, may play a role in axonal development. The polypeptide is Failed axon connections homolog (FAXC) (Homo sapiens (Human)).